A 275-amino-acid polypeptide reads, in one-letter code: Dermonecrotic toxin LamSicTox-alphaIV1i (275 aa).

The active site involves His-5. Positions 25 and 27 each coordinate Mg(2+). The active-site Nucleophile is the His-41. 2 disulfides stabilise this stretch: Cys-45/Cys-51 and Cys-47/Cys-192. Position 85 (Asp-85) interacts with Mg(2+).

Belongs to the arthropod phospholipase D family. Class II subfamily. Requires Mg(2+) as cofactor. Expressed by the venom gland.

Its subcellular location is the secreted. The enzyme catalyses an N-(acyl)-sphingosylphosphocholine = an N-(acyl)-sphingosyl-1,3-cyclic phosphate + choline. It carries out the reaction an N-(acyl)-sphingosylphosphoethanolamine = an N-(acyl)-sphingosyl-1,3-cyclic phosphate + ethanolamine. It catalyses the reaction a 1-acyl-sn-glycero-3-phosphocholine = a 1-acyl-sn-glycero-2,3-cyclic phosphate + choline. The catalysed reaction is a 1-acyl-sn-glycero-3-phosphoethanolamine = a 1-acyl-sn-glycero-2,3-cyclic phosphate + ethanolamine. Its function is as follows. Dermonecrotic toxins cleave the phosphodiester linkage between the phosphate and headgroup of certain phospholipids (sphingolipid and lysolipid substrates), forming an alcohol (often choline) and a cyclic phosphate. This toxin acts on sphingomyelin (SM). It may also act on ceramide phosphoethanolamine (CPE), lysophosphatidylcholine (LPC) and lysophosphatidylethanolamine (LPE), but not on lysophosphatidylserine (LPS), and lysophosphatidylglycerol (LPG). It acts by transphosphatidylation, releasing exclusively cyclic phosphate products as second products. Induces dermonecrosis, hemolysis, increased vascular permeability, edema, inflammatory response, and platelet aggregation. The protein is Dermonecrotic toxin LamSicTox-alphaIV1i of Loxosceles amazonica (Recluse spider).